A 366-amino-acid polypeptide reads, in one-letter code: MITLQRTPLFDVYAKYGGKTIDFGGWELPVQFSSIKEEHEAVRTAAGLFDVSHMGEVEVKGVDSLAFLQRVVTNDVSTLKVGGAQYTAMCYENGGTVDDLLIYKRGEEDYLLVINASNIEKDYEWLASHVIGDATVVNVSNEVAQLAIQGPKAEGILQKVVSEDLKEIKFFKFKNDILVDGIPALVSRTGYTGEDGFEIYCKSEDAAKLWEKLLEVGAEEGLKPCGLGARDTLRFEATLPLYGQELSKDITPIEAGIGFAVKPNKEADFFGKATLKEQKENGAPRKLVGIEVIERGIPRTHYPVFIGEEKIGEVTSGTQSPTLKKSIGLALIDVKYAAVDTEVEIEIRNKRVKAVVVPTPFYKRSK.

The protein belongs to the GcvT family. The glycine cleavage system is composed of four proteins: P, T, L and H.

It carries out the reaction N(6)-[(R)-S(8)-aminomethyldihydrolipoyl]-L-lysyl-[protein] + (6S)-5,6,7,8-tetrahydrofolate = N(6)-[(R)-dihydrolipoyl]-L-lysyl-[protein] + (6R)-5,10-methylene-5,6,7,8-tetrahydrofolate + NH4(+). In terms of biological role, the glycine cleavage system catalyzes the degradation of glycine. This is Aminomethyltransferase from Bacillus cereus (strain ZK / E33L).